The chain runs to 133 residues: P2Y purinoceptor 2 (133 aa).

At 1 to 26 (ISVHRCLGVLRPLHSLRWGRARYARR) the chain is on the cytoplasmic side. A helical transmembrane segment spans residues 27–47 (VAFAVWVLVLYCQAPVLYFVT). At 48–74 (TSTRSSRIICHDTSARELFSHFVAYSS) the chain is on the extracellular side. The chain crosses the membrane as a helical span at residues 75–95 (VMLSLLFAAPFAVILVCYVLM). The Cytoplasmic segment spans residues 96–116 (ARRLLKPAYGTSGGLPRAKRK). Residues 117 to 133 (SVRTIAIVLTVFVLCFL) traverse the membrane as a helical segment.

This sequence belongs to the G-protein coupled receptor 1 family.

The protein resides in the cell membrane. Its function is as follows. Receptor for ATP and UTP coupled to G-proteins that activate a phosphatidylinositol-calcium second messenger system. This chain is P2Y purinoceptor 2 (P2RY2), found in Bos taurus (Bovine).